The following is a 345-amino-acid chain: Aspartate-semialdehyde dehydrogenase (345 aa).

Residues 11-14 and 39-40 each bind NADP(+); these read TGQV and RS. Residue R99 participates in phosphate binding. C130 acts as the Acyl-thioester intermediate in catalysis. Q157 serves as a coordination point for substrate. 160–161 contributes to the NADP(+) binding site; sequence SG. K227 lines the phosphate pocket. Substrate is bound at residue R249. The Proton acceptor role is filled by H256. An NADP(+)-binding site is contributed by N325.

Belongs to the aspartate-semialdehyde dehydrogenase family. As to quaternary structure, homodimer.

It catalyses the reaction L-aspartate 4-semialdehyde + phosphate + NADP(+) = 4-phospho-L-aspartate + NADPH + H(+). It functions in the pathway amino-acid biosynthesis; L-lysine biosynthesis via DAP pathway; (S)-tetrahydrodipicolinate from L-aspartate: step 2/4. It participates in amino-acid biosynthesis; L-methionine biosynthesis via de novo pathway; L-homoserine from L-aspartate: step 2/3. Its pathway is amino-acid biosynthesis; L-threonine biosynthesis; L-threonine from L-aspartate: step 2/5. Its function is as follows. Catalyzes the NADPH-dependent formation of L-aspartate-semialdehyde (L-ASA) by the reductive dephosphorylation of L-aspartyl-4-phosphate. The sequence is that of Aspartate-semialdehyde dehydrogenase from Mycobacterium bovis (strain ATCC BAA-935 / AF2122/97).